The chain runs to 468 residues: Asparagine--tRNA ligase (468 aa).

This sequence belongs to the class-II aminoacyl-tRNA synthetase family. Homodimer.

Its subcellular location is the cytoplasm. The enzyme catalyses tRNA(Asn) + L-asparagine + ATP = L-asparaginyl-tRNA(Asn) + AMP + diphosphate + H(+). This is Asparagine--tRNA ligase from Parabacteroides distasonis (strain ATCC 8503 / DSM 20701 / CIP 104284 / JCM 5825 / NCTC 11152).